The following is a 489-amino-acid chain: MKLQTLLSRLPGFWVHRGGNPDIVALEMDSRHVTPGSLFFCVKGFTVDGHDFAEQAVERGAVAIVAERPLSVNVPVVVVPDSRRAMAILADAFYGQPTHRLHLIGVTGTNGKTTTTHIIEQVARKAGKKIGLIGTVGTKIGDRSYPAVNTTPESLVLQRTFKQMVDEGVEFVTMEVSSHALHQGRVHGCDYDVAVFTNLTQDHLDYHGTMEEYRNAKGLLFAQLGNRYDERRPKFAVLNHDDPVSQYYKHMTAAPIITYGIKEKSDVMAEQIEMTPGGMAFQLCTPHGTMAIETKLVGLFNVYNLLAATAACLASGFSLATIAEALANVSPVPGRFETVDEGQNFTVIVDYAHTPDSVENALKTVRQFAKRNVYVVIGCGGDRDRTKRPLMAQAAVRYADVAVFTSDNPRSEDPRQILRDMEAGVSAGDGTYVTIPDREEAIRYAIGQAQEGDVVLIAGKGHETYQIIGDDVIDFDDRAVARAAVKERR.

S30 lines the UDP-N-acetyl-alpha-D-muramoyl-L-alanyl-D-glutamate pocket. 108-114 contacts ATP; that stretch reads GTNGKTT. UDP-N-acetyl-alpha-D-muramoyl-L-alanyl-D-glutamate-binding positions include N149, 150 to 151, S177, Q183, and R185; that span reads TT. At K217 the chain carries N6-carboxylysine. Meso-2,6-diaminopimelate-binding positions include R383, 407–410, G459, and E463; that span reads DNPR. Positions 407-410 match the Meso-diaminopimelate recognition motif motif; it reads DNPR.

It belongs to the MurCDEF family. MurE subfamily. Mg(2+) is required as a cofactor. In terms of processing, carboxylation is probably crucial for Mg(2+) binding and, consequently, for the gamma-phosphate positioning of ATP.

The protein resides in the cytoplasm. It catalyses the reaction UDP-N-acetyl-alpha-D-muramoyl-L-alanyl-D-glutamate + meso-2,6-diaminopimelate + ATP = UDP-N-acetyl-alpha-D-muramoyl-L-alanyl-gamma-D-glutamyl-meso-2,6-diaminopimelate + ADP + phosphate + H(+). The protein operates within cell wall biogenesis; peptidoglycan biosynthesis. Its function is as follows. Catalyzes the addition of meso-diaminopimelic acid to the nucleotide precursor UDP-N-acetylmuramoyl-L-alanyl-D-glutamate (UMAG) in the biosynthesis of bacterial cell-wall peptidoglycan. The sequence is that of UDP-N-acetylmuramoyl-L-alanyl-D-glutamate--2,6-diaminopimelate ligase from Geobacillus thermodenitrificans (strain NG80-2).